We begin with the raw amino-acid sequence, 421 residues long: Gamma-glutamyl phosphate reductase (421 aa).

This sequence belongs to the gamma-glutamyl phosphate reductase family.

The protein resides in the cytoplasm. It catalyses the reaction L-glutamate 5-semialdehyde + phosphate + NADP(+) = L-glutamyl 5-phosphate + NADPH + H(+). Its pathway is amino-acid biosynthesis; L-proline biosynthesis; L-glutamate 5-semialdehyde from L-glutamate: step 2/2. Its function is as follows. Catalyzes the NADPH-dependent reduction of L-glutamate 5-phosphate into L-glutamate 5-semialdehyde and phosphate. The product spontaneously undergoes cyclization to form 1-pyrroline-5-carboxylate. The chain is Gamma-glutamyl phosphate reductase from Pseudomonas fluorescens (strain ATCC BAA-477 / NRRL B-23932 / Pf-5).